We begin with the raw amino-acid sequence, 523 residues long: Polypyrimidine tract-binding protein 3 (523 aa).

A disordered region spans residues 1-25 (MNSSTSAGVYANGNDNKKFKGDRPP). RRM domains follow at residues 30 to 114 (RVLH…NLPN), 153 to 229 (LRII…FSKL), and 329 to 403 (SVLL…LSKH). Residue K36 forms a Glycyl lysine isopeptide (Lys-Gly) (interchain with G-Cter in SUMO2) linkage. Y98 is subject to Phosphotyrosine. The residue at position 109 (T109) is a Phosphothreonine. A Glycyl lysine isopeptide (Lys-Gly) (interchain with G-Cter in SUMO2) cross-link involves residue K187. K394 carries the post-translational modification N6-acetyllysine. The disordered stretch occupies residues 406–426 (VQLPREGQEDQGLTKDFSNSP). S425 carries the post-translational modification Phosphoserine. In terms of domain architecture, RRM 4 spans 446–521 (ATLHLSNIPP…HHLRVSFSKS (76 aa)).

As to quaternary structure, interacts with THBS4 (via the acidic amphipathic C-terminus).

RNA-binding protein that mediates pre-mRNA alternative splicing regulation. Plays a role in the regulation of cell proliferation, differentiation and migration. Positive regulator of EPO-dependent erythropoiesis. Participates in cell differentiation regulation by repressing tissue-specific exons. Promotes Fas exon 6 skipping. Binds RNA, preferentially to both poly(G) and poly(U). In Mus musculus (Mouse), this protein is Polypyrimidine tract-binding protein 3 (Ptbp3).